The sequence spans 139 residues: Endoribonuclease YbeY (139 aa).

3 residues coordinate Zn(2+): histidine 110, histidine 114, and histidine 120.

The protein belongs to the endoribonuclease YbeY family. It depends on Zn(2+) as a cofactor.

Its subcellular location is the cytoplasm. In terms of biological role, single strand-specific metallo-endoribonuclease involved in late-stage 70S ribosome quality control and in maturation of the 3' terminus of the 16S rRNA. This is Endoribonuclease YbeY from Thermus thermophilus (strain ATCC BAA-163 / DSM 7039 / HB27).